The sequence spans 447 residues: Flagellum-specific ATP synthase (447 aa).

167–174 provides a ligand contact to ATP; the sequence is SGSGVGKS.

The protein belongs to the ATPase alpha/beta chains family.

Its subcellular location is the cytoplasm. The catalysed reaction is ATP + H2O + 4 H(+)(in) = ADP + phosphate + 5 H(+)(out). In terms of biological role, probable catalytic subunit of a protein translocase for flagellum-specific export, or a proton translocase involved in local circuits at the flagellum. This is Flagellum-specific ATP synthase (fliI) from Treponema pallidum (strain Nichols).